We begin with the raw amino-acid sequence, 264 residues long: Nicotinamide N-methyltransferase (264 aa).

A Citrulline; alternate modification is found at Arg18. Tyr20, Tyr25, Gly63, Tyr69, Asp85, Thr87, and Asn90 together coordinate S-adenosyl-L-methionine. Arg132 carries the post-translational modification Citrulline; alternate. S-adenosyl-L-methionine is bound by residues 142–143 (DV) and Thr163. Citrulline; alternate is present on Arg181. The nicotinamide site is built by Asp197 and Ser213.

The protein belongs to the class I-like SAM-binding methyltransferase superfamily. NNMT/PNMT/TEMT family. As to quaternary structure, monomer. Post-translationally, deiminated by PADI1 and PADI2. Expressed in white adipose tissue and liver (at protein level).

The protein localises to the cytoplasm. The catalysed reaction is nicotinamide + S-adenosyl-L-methionine = 1-methylnicotinamide + S-adenosyl-L-homocysteine. It functions in the pathway cofactor metabolism. The protein operates within amino-acid degradation. With respect to regulation, inhibited by 6-methoxynicotinamide (JBSNF-000088). In terms of biological role, catalyzes the N-methylation of nicotinamide using the universal methyl donor S-adenosyl-L-methionine to form N1-methylnicotinamide and S-adenosyl-L-homocysteine, a predominant nicotinamide/vitamin B3 clearance pathway. Plays a central role in regulating cellular methylation potential, by consuming S-adenosyl-L-methionine and limiting its availability for other methyltransferases. Actively mediates genome-wide epigenetic and transcriptional changes through hypomethylation of repressive chromatin marks, such as H3K27me3. In a developmental context, contributes to low levels of the repressive histone marks that characterize pluripotent embryonic stem cell pre-implantation state. Acts as a metabolic regulator primarily on white adipose tissue energy expenditure as well as hepatic gluconeogenesis and cholesterol biosynthesis. In white adipocytes, regulates polyamine flux by consuming S-adenosyl-L-methionine which provides for propylamine group in polyamine biosynthesis, whereas by consuming nicotinamide controls NAD(+) levels through the salvage pathway. Via its product N1-methylnicotinamide regulates protein acetylation in hepatocytes, by repressing the ubiquitination and increasing the stability of SIRT1 deacetylase. Can also N-methylate other pyridines structurally related to nicotinamide and play a role in xenobiotic detoxification. The sequence is that of Nicotinamide N-methyltransferase (Nnmt) from Mus musculus (Mouse).